The following is a 380-amino-acid chain: 3-dehydroquinate synthase (380 aa).

Belongs to the archaeal-type DHQ synthase family.

It carries out the reaction 2-amino-2,3,7-trideoxy-D-lyxo-hept-6-ulosonate + NAD(+) + H2O = 3-dehydroquinate + NH4(+) + NADH + H(+). In terms of biological role, catalyzes the oxidative deamination and cyclization of 2-amino-3,7-dideoxy-D-threo-hept-6-ulosonic acid (ADH) to yield 3-dehydroquinate (DHQ), which is fed into the canonical shikimic pathway of aromatic amino acid biosynthesis. The protein is 3-dehydroquinate synthase of Methanosarcina acetivorans (strain ATCC 35395 / DSM 2834 / JCM 12185 / C2A).